The following is a 380-amino-acid chain: Glutamyl-tRNA reductase 1 (380 aa).

Residues 42 to 45 (TCNR), S93, 98 to 100 (ETD), and Q104 each bind substrate. Catalysis depends on C43, which acts as the Nucleophile. 172–177 (GAGAVG) contacts NADP(+).

This sequence belongs to the glutamyl-tRNA reductase family. Homodimer.

The catalysed reaction is (S)-4-amino-5-oxopentanoate + tRNA(Glu) + NADP(+) = L-glutamyl-tRNA(Glu) + NADPH + H(+). The protein operates within porphyrin-containing compound metabolism; protoporphyrin-IX biosynthesis; 5-aminolevulinate from L-glutamyl-tRNA(Glu): step 1/2. Catalyzes the NADPH-dependent reduction of glutamyl-tRNA(Glu) to glutamate 1-semialdehyde (GSA). In Pyrobaculum calidifontis (strain DSM 21063 / JCM 11548 / VA1), this protein is Glutamyl-tRNA reductase 1.